A 196-amino-acid polypeptide reads, in one-letter code: Imidazole glycerol phosphate synthase subunit HisH (196 aa).

Residues 2–196 (KVAVIKYNAG…ERIIKNFLEL (195 aa)) enclose the Glutamine amidotransferase type-1 domain. The active-site Nucleophile is Cys-77. Active-site residues include His-178 and Glu-180.

Heterodimer of HisH and HisF.

It localises to the cytoplasm. It carries out the reaction 5-[(5-phospho-1-deoxy-D-ribulos-1-ylimino)methylamino]-1-(5-phospho-beta-D-ribosyl)imidazole-4-carboxamide + L-glutamine = D-erythro-1-(imidazol-4-yl)glycerol 3-phosphate + 5-amino-1-(5-phospho-beta-D-ribosyl)imidazole-4-carboxamide + L-glutamate + H(+). The catalysed reaction is L-glutamine + H2O = L-glutamate + NH4(+). It participates in amino-acid biosynthesis; L-histidine biosynthesis; L-histidine from 5-phospho-alpha-D-ribose 1-diphosphate: step 5/9. Its function is as follows. IGPS catalyzes the conversion of PRFAR and glutamine to IGP, AICAR and glutamate. The HisH subunit catalyzes the hydrolysis of glutamine to glutamate and ammonia as part of the synthesis of IGP and AICAR. The resulting ammonia molecule is channeled to the active site of HisF. In Bacteroides fragilis (strain ATCC 25285 / DSM 2151 / CCUG 4856 / JCM 11019 / LMG 10263 / NCTC 9343 / Onslow / VPI 2553 / EN-2), this protein is Imidazole glycerol phosphate synthase subunit HisH.